We begin with the raw amino-acid sequence, 415 residues long: Chorismate synthase (415 aa).

The disordered stretch occupies residues 43–72; that stretch reads EDLDRRKPGQSMITTSRGEPDKVSIKSGLQ. Arginine 48 contacts NADP(+). FMN contacts are provided by residues 125 to 127, glycine 304, 319 to 323, and arginine 346; these read RSS and HAPVS. The interval 262 to 310 is disordered; the sequence is TDYTEDWEFGESEATASENASGDEPRARGDPKPVGNDHGGIQGGITTGD. Positions 298 to 307 are enriched in gly residues; it reads DHGGIQGGIT. A compositionally biased stretch (basic and acidic residues) spans 379–393; that stretch reads PDRLDDRPGEYDTDY. Residues 379–415 are disordered; sequence PDRLDDRPGEYDTDYHPSSPRNDPEDADTHATTVDED.

This sequence belongs to the chorismate synthase family. Requires FMNH2 as cofactor.

It catalyses the reaction 5-O-(1-carboxyvinyl)-3-phosphoshikimate = chorismate + phosphate. It participates in metabolic intermediate biosynthesis; chorismate biosynthesis; chorismate from D-erythrose 4-phosphate and phosphoenolpyruvate: step 7/7. Its function is as follows. Catalyzes the anti-1,4-elimination of the C-3 phosphate and the C-6 proR hydrogen from 5-enolpyruvylshikimate-3-phosphate (EPSP) to yield chorismate, which is the branch point compound that serves as the starting substrate for the three terminal pathways of aromatic amino acid biosynthesis. This reaction introduces a second double bond into the aromatic ring system. The sequence is that of Chorismate synthase from Halomicrobium mukohataei (strain ATCC 700874 / DSM 12286 / JCM 9738 / NCIMB 13541) (Haloarcula mukohataei).